A 560-amino-acid chain; its full sequence is Protein NRT1/ PTR FAMILY 2.5 (560 aa).

The disordered stretch occupies residues 1–20 (MADSKSGDTEVAHRSSDPSE). The next 12 membrane-spanning stretches (helical) occupy residues 34 to 54 (TLLG…VFLI), 77 to 97 (MLPV…PVIS), 101 to 121 (FISL…YLMP), 141 to 161 (ILYV…FTLA), 177 to 197 (FFNW…TAIV), 207 to 227 (LGFG…IAGV), 323 to 343 (AILR…PVAV), 372 to 392 (VIVL…IYPM), 404 to 424 (LQQV…SAVV), 441 to 461 (VLWL…HFPA), 480 to 500 (SLTS…IDVI), and 520 to 540 (YWVV…CSWF).

Belongs to the major facilitator superfamily. Proton-dependent oligopeptide transporter (POT/PTR) (TC 2.A.17) family. In terms of tissue distribution, expressed in the root epidermis or cortex.

It is found in the membrane. Its function is as follows. Transporter involved in a passive nitrate efflux. The polypeptide is Protein NRT1/ PTR FAMILY 2.5 (NPF2.5) (Arabidopsis thaliana (Mouse-ear cress)).